Consider the following 230-residue polypeptide: uncharacterized protein (230 aa).

The chain crosses the membrane as a helical span at residues 93-115; that stretch reads VFLYYFLIVYTSGNVDLISRFLF.

It belongs to the DUP/COS family.

It localises to the membrane. This is an uncharacterized protein from Saccharomyces cerevisiae (strain ATCC 204508 / S288c) (Baker's yeast).